The chain runs to 101 residues: Small ribosomal subunit protein uS10 (101 aa).

It belongs to the universal ribosomal protein uS10 family. In terms of assembly, part of the 30S ribosomal subunit.

In terms of biological role, involved in the binding of tRNA to the ribosomes. The sequence is that of Small ribosomal subunit protein uS10 from Parabacteroides distasonis (strain ATCC 8503 / DSM 20701 / CIP 104284 / JCM 5825 / NCTC 11152).